The sequence spans 160 residues: D-aminoacyl-tRNA deacylase (160 aa).

The Gly-cisPro motif, important for rejection of L-amino acids motif lies at 137–138; the sequence is GP.

The protein belongs to the DTD family. In terms of assembly, homodimer.

It localises to the cytoplasm. It carries out the reaction glycyl-tRNA(Ala) + H2O = tRNA(Ala) + glycine + H(+). It catalyses the reaction a D-aminoacyl-tRNA + H2O = a tRNA + a D-alpha-amino acid + H(+). An aminoacyl-tRNA editing enzyme that deacylates mischarged D-aminoacyl-tRNAs. Also deacylates mischarged glycyl-tRNA(Ala), protecting cells against glycine mischarging by AlaRS. Acts via tRNA-based rather than protein-based catalysis; rejects L-amino acids rather than detecting D-amino acids in the active site. By recycling D-aminoacyl-tRNA to D-amino acids and free tRNA molecules, this enzyme counteracts the toxicity associated with the formation of D-aminoacyl-tRNA entities in vivo and helps enforce protein L-homochirality. The sequence is that of D-aminoacyl-tRNA deacylase from Chloroflexus aurantiacus (strain ATCC 29364 / DSM 637 / Y-400-fl).